Reading from the N-terminus, the 153-residue chain is Endoribonuclease YbeY (153 aa).

Zn(2+) contacts are provided by His114, His118, and His124.

This sequence belongs to the endoribonuclease YbeY family. Requires Zn(2+) as cofactor.

It localises to the cytoplasm. In terms of biological role, single strand-specific metallo-endoribonuclease involved in late-stage 70S ribosome quality control and in maturation of the 3' terminus of the 16S rRNA. In Shewanella baltica (strain OS155 / ATCC BAA-1091), this protein is Endoribonuclease YbeY.